The following is a 675-amino-acid chain: INO80 complex subunit D (675 aa).

Disordered regions lie at residues 1 to 39, 183 to 203, 274 to 324, 473 to 523, and 627 to 675; these read MNNN…NVNQ, TGNN…NSTP, LKQK…ERQV, DSNK…KLNK, and VPVT…TMIS. Composition is skewed to low complexity over residues 282–318, 482–519, and 634–648; these read QQLQ…QLQI, NNDN…NNNN, and NQNN…TNNS. The span at 664–675 shows a compositional bias: basic and acidic residues; that stretch reads EILKDSDNTMIS.

Belongs to the INO80D family. As to quaternary structure, component of the chromatin-remodeling INO80 complex.

It localises to the nucleus. Putative regulatory component of the chromatin remodeling INO80 complex which is involved in transcriptional regulation, DNA replication and probably DNA repair. The sequence is that of INO80 complex subunit D from Dictyostelium discoideum (Social amoeba).